Reading from the N-terminus, the 146-residue chain is Ribonuclease H (146 aa).

One can recognise an RNase H type-1 domain in the interval 4 to 145 (ELNKVVIYTD…ADILARSQIS (142 aa)). Residues aspartate 13, glutamate 51, aspartate 73, and aspartate 137 each contribute to the Mg(2+) site.

The protein belongs to the RNase H family. In terms of assembly, monomer. Requires Mg(2+) as cofactor.

The protein localises to the cytoplasm. The catalysed reaction is Endonucleolytic cleavage to 5'-phosphomonoester.. Its function is as follows. Endonuclease that specifically degrades the RNA of RNA-DNA hybrids. The sequence is that of Ribonuclease H from Ehrlichia canis (strain Jake).